The chain runs to 431 residues: Glutamate-1-semialdehyde 2,1-aminomutase (431 aa).

Lys265 is modified (N6-(pyridoxal phosphate)lysine).

This sequence belongs to the class-III pyridoxal-phosphate-dependent aminotransferase family. HemL subfamily. In terms of assembly, homodimer. The cofactor is pyridoxal 5'-phosphate.

The protein localises to the cytoplasm. It carries out the reaction (S)-4-amino-5-oxopentanoate = 5-aminolevulinate. Its pathway is porphyrin-containing compound metabolism; protoporphyrin-IX biosynthesis; 5-aminolevulinate from L-glutamyl-tRNA(Glu): step 2/2. This chain is Glutamate-1-semialdehyde 2,1-aminomutase, found in Aliivibrio fischeri (strain ATCC 700601 / ES114) (Vibrio fischeri).